Here is a 199-residue protein sequence, read N- to C-terminus: Elongation factor Ts (199 aa).

Positions 81–84 (TDFV) are involved in Mg(2+) ion dislocation from EF-Tu.

The protein belongs to the EF-Ts family.

The protein resides in the cytoplasm. Associates with the EF-Tu.GDP complex and induces the exchange of GDP to GTP. It remains bound to the aminoacyl-tRNA.EF-Tu.GTP complex up to the GTP hydrolysis stage on the ribosome. This chain is Elongation factor Ts, found in Thermotoga sp. (strain RQ2).